We begin with the raw amino-acid sequence, 394 residues long: Phosphoglycerate kinase (394 aa).

Substrate contacts are provided by residues 21 to 23 (DFN), Arg-36, 59 to 62 (HLGR), Arg-118, and Arg-151. Position 183 is a phosphoserine (Ser-183). Lys-201 and Gly-292 together coordinate ATP. Thr-299 is subject to Phosphothreonine. Residues Glu-323 and 350–353 (GGDS) each bind ATP.

This sequence belongs to the phosphoglycerate kinase family. Monomer.

The protein localises to the cytoplasm. It catalyses the reaction (2R)-3-phosphoglycerate + ATP = (2R)-3-phospho-glyceroyl phosphate + ADP. It functions in the pathway carbohydrate degradation; glycolysis; pyruvate from D-glyceraldehyde 3-phosphate: step 2/5. This Bacillus cereus (strain ZK / E33L) protein is Phosphoglycerate kinase.